The sequence spans 921 residues: Glutamate receptor 3.7 (921 aa).

A signal peptide spans M1 to C25. Topologically, residues Q26–R580 are extracellular. N214, N300, N330, N369, N396, N478, and N568 each carry an N-linked (GlcNAc...) asparagine glycan. Residues L581–H601 form a helical membrane-spanning segment. Residues R602–R608 are Cytoplasmic-facing. The chain crosses the membrane as a helical span at residues G609–R629. Residues N630–R640 are Cytoplasmic-facing. The chain crosses the membrane as a helical span at residues L641–L661. At T662–S822 the chain is on the extracellular side. Residues F823–L843 traverse the membrane as a helical segment. The Cytoplasmic portion of the chain corresponds to R844–N921. The segment at F896–N921 is disordered.

Belongs to the glutamate-gated ion channel (TC 1.A.10.1) family. In terms of assembly, may form heteromers. As to expression, expressed predominantly in leaves and siliques. Also detected in roots.

The protein resides in the membrane. Its function is as follows. Glutamate-gated receptor that probably acts as a non-selective cation channel. May be involved in light-signal transduction and calcium homeostasis via the regulation of calcium influx into cells. The sequence is that of Glutamate receptor 3.7 (GLR3.7) from Arabidopsis thaliana (Mouse-ear cress).